The sequence spans 253 residues: RBPJ-interacting and tubulin-associated protein 1 (253 aa).

Disordered stretches follow at residues 30–89 (SPAR…KNKY), 127–175 (TPPA…LCVP), and 188–253 (HLTV…PPWK). Residues 71–81 (SPSSRGSTPNL) are compositionally biased toward polar residues. The Nuclear localization signal motif lies at 81-97 (LTPRKKNKYRLIGHAPS). Positions 112 to 140 (RMAVGDAAKLRTLFWTPPATPRGSHTPCP) are interaction with RBPJ/RBPSUH. An interaction with tubulin region spans residues 140 to 253 (PRETPLRAIH…CPPKPKPPWK (114 aa)). The span at 188-228 (HLTVPSTGHPASSAPQTNGPWSPRPNTSGATVQSPLVTSKA) shows a compositional bias: polar residues.

It belongs to the RITA family. As to quaternary structure, interacts with RBPJ/RBPSUH.

It localises to the cytoplasm. The protein localises to the nucleus. The protein resides in the cytoskeleton. Its subcellular location is the microtubule organizing center. It is found in the centrosome. In terms of biological role, tubulin-binding protein that acts as a negative regulator of Notch signaling pathway. Shuttles between the cytoplasm and the nucleus and mediates the nuclear export of RBPJ/RBPSUH, thereby preventing the interaction between RBPJ/RBPSUH and NICD product of Notch proteins (Notch intracellular domain), leading to down-regulate Notch-mediated transcription. May play a role in neurogenesis. The sequence is that of RBPJ-interacting and tubulin-associated protein 1 (Rita1) from Mus musculus (Mouse).